We begin with the raw amino-acid sequence, 218 residues long: Adenylate kinase (218 aa).

Position 10 to 15 (10 to 15) interacts with ATP; the sequence is GAGKGT. Residues 30–59 are NMP; the sequence is STGDMLRAAIAKGTPLGLSAQKIMESGGLV. Residues threonine 31, arginine 36, 57 to 59, 85 to 88, and glutamine 92 each bind AMP; these read GLV and GFPR. An LID region spans residues 122 to 159; the sequence is GRRIHQPSGRVYHVVNQPPKNPGVDDITGEPLIQRDDD. Residues arginine 123 and 132-133 each bind ATP; that span reads VY. Residues arginine 156 and arginine 167 each contribute to the AMP site. Residue glycine 203 coordinates ATP.

Belongs to the adenylate kinase family. In terms of assembly, monomer.

It localises to the cytoplasm. It carries out the reaction AMP + ATP = 2 ADP. Its pathway is purine metabolism; AMP biosynthesis via salvage pathway; AMP from ADP: step 1/1. Functionally, catalyzes the reversible transfer of the terminal phosphate group between ATP and AMP. Plays an important role in cellular energy homeostasis and in adenine nucleotide metabolism. This chain is Adenylate kinase, found in Legionella pneumophila (strain Corby).